Consider the following 414-residue polypeptide: Serine/threonine transporter SstT (414 aa).

8 helical membrane-spanning segments follow: residues 16–36, 46–66, 84–104, 143–163, 180–200, 219–239, 300–320, and 332–352; these read GSLV…AWIS, LGTL…LMLV, ILFL…VFSF, ALLN…GFAL, AVTF…FGLV, LVVL…LLVF, MAGA…TLGV, and VVAS…LLLI.

This sequence belongs to the dicarboxylate/amino acid:cation symporter (DAACS) (TC 2.A.23) family.

It is found in the cell inner membrane. It catalyses the reaction L-serine(in) + Na(+)(in) = L-serine(out) + Na(+)(out). The catalysed reaction is L-threonine(in) + Na(+)(in) = L-threonine(out) + Na(+)(out). Its function is as follows. Involved in the import of serine and threonine into the cell, with the concomitant import of sodium (symport system). The protein is Serine/threonine transporter SstT of Salmonella newport (strain SL254).